Here is a 193-residue protein sequence, read N- to C-terminus: ATP-dependent Clp protease proteolytic subunit (193 aa).

Serine 98 serves as the catalytic Nucleophile. Histidine 123 is an active-site residue.

The protein belongs to the peptidase S14 family. Fourteen ClpP subunits assemble into 2 heptameric rings which stack back to back to give a disk-like structure with a central cavity, resembling the structure of eukaryotic proteasomes.

It localises to the cytoplasm. The catalysed reaction is Hydrolysis of proteins to small peptides in the presence of ATP and magnesium. alpha-casein is the usual test substrate. In the absence of ATP, only oligopeptides shorter than five residues are hydrolyzed (such as succinyl-Leu-Tyr-|-NHMec, and Leu-Tyr-Leu-|-Tyr-Trp, in which cleavage of the -Tyr-|-Leu- and -Tyr-|-Trp bonds also occurs).. Cleaves peptides in various proteins in a process that requires ATP hydrolysis. Has a chymotrypsin-like activity. Plays a major role in the degradation of misfolded proteins. This Mannheimia succiniciproducens (strain KCTC 0769BP / MBEL55E) protein is ATP-dependent Clp protease proteolytic subunit.